The chain runs to 211 residues: MTSLAVLLTLADSRLPTGAHVHSGGIEEAIAAGMVTGLATLEAFLKRRVRTHGLLTASIAAAVHRGELAVDDADRETDARTPAPAARHASRSQGRGLIRLARRVWPDSGWEELGPRPHLAVVAGRVGALSGLAPEHNALHLVYITMTGSAIAAQRLLALDPAEVTVVTFQLSELCEQIAQEATAGLADLSDPLLDTLAQRHDERVRPLFVS.

A disordered region spans residues 71–93; that stretch reads DDADRETDARTPAPAARHASRSQ.

The protein belongs to the UreF family. As to quaternary structure, ureD, UreF and UreG form a complex that acts as a GTP-hydrolysis-dependent molecular chaperone, activating the urease apoprotein by helping to assemble the nickel containing metallocenter of UreC. The UreE protein probably delivers the nickel.

It is found in the cytoplasm. In terms of biological role, required for maturation of urease via the functional incorporation of the urease nickel metallocenter. The sequence is that of Urease accessory protein UreF from Mycobacterium tuberculosis (strain ATCC 25177 / H37Ra).